The primary structure comprises 718 residues: SANT and BTB domain regulator of class switch recombination (718 aa).

The SANT domain occupies 21–59 (DMILYPLIGIPQTINWETIARLVPGLTPKECAKRFDELK). Residues 118–134 (ASTRNCSSESENCTTHN) are compositionally biased toward polar residues. The interval 118–142 (ASTRNCSSESENCTTHNGGEMTEES) is disordered. The region spanning 147–255 (MVIHVCDEAK…QCIQYCHKNM (109 aa)) is the BTB domain. Residues 555–576 (SEEEEYTTGSEVTEDEVGDEEE) are compositionally biased toward acidic residues. Disordered regions lie at residues 555 to 622 (SEEE…SPFV) and 692 to 718 (SVPV…GRPA). Basic residues predominate over residues 580–595 (KQRKKEKPKKFTRQPK). Residues 604 to 615 (QRKEKALEKSAS) are compositionally biased toward basic and acidic residues.

It belongs to the KIAA1841 family. In terms of assembly, homodimer. Interacts (via the BTB domain) with HDAC1 and NCOR2.

Negatively regulates class switch recombination or isotype switching in splenic B-cells. In Homo sapiens (Human), this protein is SANT and BTB domain regulator of class switch recombination.